The chain runs to 220 residues: Charged multivesicular body protein 2a (220 aa).

M1 is subject to N-acetylmethionine. 2 coiled-coil regions span residues 12 to 52 (EELL…KMAK) and 195 to 220 (RAAE…LRRD). An MIT-interacting motif motif is present at residues 208-218 (ADLEERLKNLR).

It belongs to the SNF7 family. As to quaternary structure, probable core component of the endosomal sorting required for transport complex III (ESCRT-III). ESCRT-III components are thought to multimerize to form a flat lattice on the perimeter membrane of the endosome.

The protein resides in the late endosome membrane. It is found in the cytoplasm. Functionally, probable core component of the endosomal sorting required for transport complex III (ESCRT-III) which is involved in multivesicular bodies (MVBs) formation and sorting of endosomal cargo proteins into MVBs. MVBs contain intraluminal vesicles (ILVs) that are generated by invagination and scission from the limiting membrane of the endosome and mostly are delivered to lysosomes enabling degradation of membrane proteins, such as stimulated growth factor receptors, lysosomal enzymes and lipids. The polypeptide is Charged multivesicular body protein 2a (CHMP2A) (Gallus gallus (Chicken)).